Consider the following 446-residue polypeptide: Exodeoxyribonuclease 7 large subunit (446 aa).

It belongs to the XseA family. Heterooligomer composed of large and small subunits.

It localises to the cytoplasm. The enzyme catalyses Exonucleolytic cleavage in either 5'- to 3'- or 3'- to 5'-direction to yield nucleoside 5'-phosphates.. Functionally, bidirectionally degrades single-stranded DNA into large acid-insoluble oligonucleotides, which are then degraded further into small acid-soluble oligonucleotides. The protein is Exodeoxyribonuclease 7 large subunit of Streptococcus pyogenes serotype M49 (strain NZ131).